A 158-amino-acid chain; its full sequence is Regulator of sigma D (158 aa).

The protein belongs to the Rsd/AlgQ family. In terms of assembly, interacts with RpoD.

The protein resides in the cytoplasm. Functionally, binds RpoD and negatively regulates RpoD-mediated transcription activation by preventing the interaction between the primary sigma factor RpoD with the catalytic core of the RNA polymerase and with promoter DNA. May be involved in replacement of the RNA polymerase sigma subunit from RpoD to RpoS during the transition from exponential growth to the stationary phase. The polypeptide is Regulator of sigma D (Escherichia coli (strain SMS-3-5 / SECEC)).